The sequence spans 498 residues: DELTA-thalatoxin-Avl2a (498 aa).

The N-terminal stretch at 1–22 (MSPYFKLSSALIFLAITMEALC) is a signal peptide. Residues 23 to 35 (SPIENTSTSNKDN) constitute a propeptide that is removed on maturation. Positions 23-359 (SPIENTSTSN…GFLHFGCSFL (337 aa)) constitute an MACPF domain. Residues 135-159 (AAVTNNIASSEEEVQGLSLNLKAYS) are a coiled coil. Cystine bridges form between Cys-389/Cys-402, Cys-396/Cys-410, and Cys-412/Cys-422. In terms of domain architecture, EGF-like spans 410–422 (CECGGPYDLARTC).

The protein localises to the secreted. The protein resides in the nematocyst. Is lethal to mice, and may cause hemolytic activity. This is DELTA-thalatoxin-Avl2a from Actineria villosa (Okinawan sea anemone).